Consider the following 70-residue polypeptide: DNA-directed RNA polymerase subunit omega (70 aa).

This sequence belongs to the RNA polymerase subunit omega family. In cyanobacteria the RNAP catalytic core is composed of 2 alpha, 1 beta, 1 beta', 1 gamma and 1 omega subunit. When a sigma factor is associated with the core the holoenzyme is formed, which can initiate transcription.

It catalyses the reaction RNA(n) + a ribonucleoside 5'-triphosphate = RNA(n+1) + diphosphate. Promotes RNA polymerase assembly. Latches the N- and C-terminal regions of the beta' subunit thereby facilitating its interaction with the beta and alpha subunits. This Prochlorococcus marinus (strain NATL1A) protein is DNA-directed RNA polymerase subunit omega.